A 384-amino-acid polypeptide reads, in one-letter code: Secreted LysM effector Blys7 (384 aa).

The N-terminal stretch at 1–18 is a signal peptide; the sequence is MQRHLLLGLAGLPALLSA. Residues 27 to 71 form the LysM 1 domain; sequence FATVAANGETCDSMAATWGLDTATFQSLNPKAKCPEVIGGEQYCV. Low complexity predominate over residues 81–106; that stretch reads EPTTAPATTSTQTTTTTTTEVTSTTV. Positions 81–112 are disordered; it reads EPTTAPATTSTQTTTTTTTEVTSTTVPGNGIT. In terms of domain architecture, LysM 2 spans 127-173; that stretch reads KFYFVNKGDNCADITARYNLDLSDFLEWNPKAGNSCSGLWANAYACV. The tract at residues 183–206 is disordered; sequence KPKPTSTSTKPPTATGNGIPTPLP. Positions 186–195 are enriched in low complexity; sequence PTSTSTKPPT. A LysM 3 domain is found at 217 to 263; it reads KFYLVKPGETCADIASRNGVSLSDFLQWNPHAGNACSGLWANAYACL.

Belongs to the secreted LysM effector family.

Its function is as follows. Might have a role in sequestration of chitin oligosaccharides (breakdown products of fungal cell walls that are released during invasion and act as triggers of host immunity) to dampen host defense. The protein is Secreted LysM effector Blys7 of Beauveria bassiana (strain ARSEF 2860) (White muscardine disease fungus).